We begin with the raw amino-acid sequence, 530 residues long: DEK domain-containing chromatin-associated protein 2 (530 aa).

Composition is skewed to basic and acidic residues over residues 1–47 (MATE…AEEE) and 57–68 (AKEGELGEKDKE). Residues 1–130 (MATETLDEKT…PSKSVSIEKG (130 aa)) form a disordered region. The stretch at 41–61 (IGEAEEEKKEDEEEGEAKEGE) forms a coiled coil. Acidic residues predominate over residues 69 to 82 (DDVESEEEEEEEEG). Basic and acidic residues-rich tracts occupy residues 83–93 (SGSKKSSEKET) and 100–110 (RPTRERKKVER). Residues 185–205 (EKEEEKQRARIKEKIDKCVKE) are a coiled coil. The interval 246-430 (IIADQEKAKK…GKAKAEPTRK (185 aa)) is disordered. Over residues 253–263 (AKKRKSTPKRG) the composition is skewed to basic residues. A Nuclear localization signal 1 motif is present at residues 260-267 (PKRGKSGE). Positions 286–332 (SDTEEGKDEGDADSEGTNDPHEEDDAAPEEESDHEKTDTDDEKDEVE) are enriched in acidic residues. 2 consecutive short sequence motifs (nuclear localization signal) follow at residues 343–350 (SKKTVEES) and 384–391 (AKKQKVDH). A compositionally biased stretch (polar residues) spans 374–384 (KQIAKSTSSPA). The span at 387–397 (QKVDHVESSKE) shows a compositional bias: basic and acidic residues. The DEK-C domain maps to 426–481 (EPTRKEMLEVVSKILKEVDFNTATLSDILQKLSDHFGVELSHRKPEVKDVITEAIN). 2 DNA-binding regions span residues 444-458 (DFNT…QKLS) and 473-477 (KDVIT). Positions 482 to 530 (AMTDDEEEDEEEEAEAGSDKEKEEVKGEEEEEKAEAESDKEKEKEEPKD) are disordered. Acidic residues predominate over residues 484-497 (TDDEEEDEEEEAEA). A coiled-coil region spans residues 492–527 (EEEAEAGSDKEKEEVKGEEEEEKAEAESDKEKEKEE). A compositionally biased stretch (basic and acidic residues) spans 516-530 (EAESDKEKEKEEPKD).

Found in a mRNA splicing-dependent exon junction complex (EJC). Binds specifically histones H3 and H4.

It is found in the nucleus. The protein resides in the nucleolus. In terms of biological role, chromatin-associated protein which contributes to the modulation of chromatin structure (such as super-helical structure of DNA) and function. Binds to chromatin of protein-coding genes throughout the genome to regulate nucleosome occupancy and chromatin accessibility, and to modulate the expression of target genes. The sequence is that of DEK domain-containing chromatin-associated protein 2 from Arabidopsis thaliana (Mouse-ear cress).